The primary structure comprises 321 residues: Bifunctional methyltransferase/endonuclease (321 aa).

The interval 1–86 is probable methylated-DNA--protein-cysteine methyltransferase; it reads MLSVDYENFD…PLGSAEKMRR (86 aa). C61 is a catalytic residue. The tract at residues 87–318 is endonuclease V; that stretch reads LIRDGITITN…YDFSTRNTAI (232 aa). Mg(2+)-binding residues include D145 and D204.

This sequence in the N-terminal section; belongs to the MGMT family. It in the C-terminal section; belongs to the endonuclease V family. The cofactor is Mg(2+).

It localises to the cytoplasm. The enzyme catalyses Endonucleolytic cleavage at apurinic or apyrimidinic sites to products with a 5'-phosphate.. Functionally, DNA repair enzyme involved in the repair of deaminated bases. Selectively cleaves double-stranded DNA at the second phosphodiester bond 3' to a deoxyinosine leaving behind the intact lesion on the nicked DNA. The protein is Bifunctional methyltransferase/endonuclease of Thermoplasma volcanium (strain ATCC 51530 / DSM 4299 / JCM 9571 / NBRC 15438 / GSS1).